Consider the following 460-residue polypeptide: Hydroxymethylglutaryl-CoA synthase MYCGRDRAFT_54740 (460 aa).

A35 contacts (3S)-3-hydroxy-3-methylglutaryl-CoA. The Proton donor/acceptor role is filled by E86. (3S)-3-hydroxy-3-methylglutaryl-CoA is bound by residues C120, N158, T162, S212, H262, K271, N339, and S373. The active-site Acyl-thioester intermediate is the C120. The active-site Proton donor/acceptor is H262.

This sequence belongs to the thiolase-like superfamily. HMG-CoA synthase family.

It carries out the reaction acetoacetyl-CoA + acetyl-CoA + H2O = (3S)-3-hydroxy-3-methylglutaryl-CoA + CoA + H(+). It functions in the pathway siderophore biosynthesis. Its function is as follows. Hydroxymethylglutaryl-CoA synthase involved in the biosynthesis of a ferrichrome A-like siderophors which may contribute to organismal virulence. The first step of siderophore biosynthesis is performed by the HMG-CoA synthase (HMGS) MYCGRDRAFT_54740 which catalyzes the generation of HMG-CoA and CoA using acetoacetyl-CoA and acetyl-CoA as substrates. The enoyl-CoA isomerase/hydratase MYCGRDRAFT_76805 then catalyzes the conversion of HMG-CoA to methylglutaconyl-CoA. The acyltransferase MYCGRDRAFT_85486 then fuses methylglutaconyl-CoA with hydroxyornithine to yield methylglutaconyl hydroxyornithine. Methylglutaconyl hydroxyornithine is then available for use by the nonribosomal peptide synthetase NRPS2 to generate the ferrichrome A-like siderophore. This is Hydroxymethylglutaryl-CoA synthase MYCGRDRAFT_54740 (ERG13) from Zymoseptoria tritici (strain CBS 115943 / IPO323) (Speckled leaf blotch fungus).